We begin with the raw amino-acid sequence, 258 residues long: MEIVIRKTPEQVSLQAADILEPYVSEGATLGLATGSTPLGTYQELIRRHNESGLSFANNQAFLLDEYVGLPRDHEQSYYRTIRREFTEHIDIKDEAVSSPDGLADNIDEAGRAYDERIRNAGGVDIQILGIGTDGHIGFNEPGSSLNSPTRLKTLHPQTVSDNARFFDSEDDVPRHVLTQGLGTIQHARHLLLLATGKNKAAAVQALAEGPVSASCPASVLQLHPHATVIIDEAAATCLEHKEYYIFAEKNKPEWQRY.

Catalysis depends on D65, which acts as the Proton acceptor; for enolization step. D134 acts as the For ring-opening step in catalysis. H136 acts as the Proton acceptor; for ring-opening step in catalysis. E141 serves as the catalytic For ring-opening step.

Belongs to the glucosamine/galactosamine-6-phosphate isomerase family. NagB subfamily.

The enzyme catalyses alpha-D-glucosamine 6-phosphate + H2O = beta-D-fructose 6-phosphate + NH4(+). It participates in amino-sugar metabolism; N-acetylneuraminate degradation; D-fructose 6-phosphate from N-acetylneuraminate: step 5/5. In terms of biological role, catalyzes the reversible isomerization-deamination of glucosamine 6-phosphate (GlcN6P) to form fructose 6-phosphate (Fru6P) and ammonium ion. This Corynebacterium kroppenstedtii (strain DSM 44385 / JCM 11950 / CIP 105744 / CCUG 35717) protein is Glucosamine-6-phosphate deaminase.